We begin with the raw amino-acid sequence, 250 residues long: Proteasome subunit alpha type-4-A (250 aa).

Glycyl lysine isopeptide (Lys-Gly) (interchain with G-Cter in ubiquitin) cross-links involve residues K40 and K64.

It belongs to the peptidase T1A family. As to quaternary structure, component of the 20S core complex of the 26S proteasome. The 26S proteasome is composed of a core protease (CP), known as the 20S proteasome, capped at one or both ends by the 19S regulatory particle (RP/PA700). The 20S proteasome core is composed of 28 subunits that are arranged in four stacked rings, resulting in a barrel-shaped structure. The two end rings are each formed by seven alpha subunits, and the two central rings are each formed by seven beta subunits. The catalytic chamber with the active sites is on the inside of the barrel. In terms of tissue distribution, ubiquitous low levels, higher expression in siliques and flowers.

The protein localises to the cytoplasm. Its subcellular location is the nucleus. In terms of biological role, the proteasome is a multicatalytic proteinase complex which is characterized by its ability to cleave peptides with Arg, Phe, Tyr, Leu, and Glu adjacent to the leaving group at neutral or slightly basic pH. The proteasome has an ATP-dependent proteolytic activity. The protein is Proteasome subunit alpha type-4-A (PAC1) of Arabidopsis thaliana (Mouse-ear cress).